Reading from the N-terminus, the 127-residue chain is Fluoride-specific ion channel FluC (127 aa).

Helical transmembrane passes span 1–21 (MPQGLALYCFIAAGGATGACL), 39–59 (FGTLTVNVVGSFALALLYGVI), 72–92 (LIGVGLLGAFTTFSTFSVETL), and 105–125 (ANVFLNVGACLLAGWLAIELM). 2 residues coordinate Na(+): G79 and T82.

The protein belongs to the fluoride channel Fluc/FEX (TC 1.A.43) family.

It is found in the cell inner membrane. The enzyme catalyses fluoride(in) = fluoride(out). Na(+) is not transported, but it plays an essential structural role and its presence is essential for fluoride channel function. In terms of biological role, fluoride-specific ion channel. Important for reducing fluoride concentration in the cell, thus reducing its toxicity. The chain is Fluoride-specific ion channel FluC from Alteromonas mediterranea (strain DSM 17117 / CIP 110805 / LMG 28347 / Deep ecotype).